The following is a 419-amino-acid chain: Large ribosomal subunit protein uL4 (419 aa).

Alanine 2 is modified (N-acetylalanine). Lysine 14 carries the N6-acetyllysine modification. Position 97 is an omega-N-methylarginine (arginine 97). At lysine 106 the chain carries N6-acetyllysine. Residue lysine 239 forms a Glycyl lysine isopeptide (Lys-Gly) (interchain with G-Cter in SUMO2) linkage. Lysine 259 is subject to N6-acetyllysine. Threonine 266 carries the post-translational modification Phosphothreonine. Serine 290 and serine 295 each carry phosphoserine. Citrulline is present on arginine 300. Lysine 327 is covalently cross-linked (Glycyl lysine isopeptide (Lys-Gly) (interchain with G-Cter in SUMO2)). 2 positions are modified to N6-acetyllysine: lysine 333 and lysine 353. Lysine 364 bears the N6-acetyllysine; alternate mark. Residue lysine 364 forms a Glycyl lysine isopeptide (Lys-Gly) (interchain with G-Cter in SUMO1); alternate linkage. Residues 364-379 (KSEKVVPEKGTADKKP) show a composition bias toward basic and acidic residues. A disordered region spans residues 364–419 (KSEKVVPEKGTADKKPAVGKKGKKVDAKKQKPAGKKVVAKKPAEKKPTTEEKKPAA). Serine 365 carries the phosphoserine modification. The segment covering 393–402 (QKPAGKKVVA) has biased composition (basic residues). Over residues 404-419 (KPAEKKPTTEEKKPAA) the composition is skewed to basic and acidic residues.

The protein belongs to the universal ribosomal protein uL4 family. As to quaternary structure, component of the large ribosomal subunit. May bind IPO9 with low affinity. Interacts with RBM3. Citrullinated by PADI4.

It is found in the cytoplasm. Functionally, component of the large ribosomal subunit. The ribosome is a large ribonucleoprotein complex responsible for the synthesis of proteins in the cell. The polypeptide is Large ribosomal subunit protein uL4 (Rpl4) (Mus musculus (Mouse)).